A 368-amino-acid chain; its full sequence is S-adenosylmethionine:tRNA ribosyltransferase-isomerase (368 aa).

Belongs to the QueA family. As to quaternary structure, monomer.

The protein localises to the cytoplasm. It carries out the reaction 7-aminomethyl-7-carbaguanosine(34) in tRNA + S-adenosyl-L-methionine = epoxyqueuosine(34) in tRNA + adenine + L-methionine + 2 H(+). It functions in the pathway tRNA modification; tRNA-queuosine biosynthesis. In terms of biological role, transfers and isomerizes the ribose moiety from AdoMet to the 7-aminomethyl group of 7-deazaguanine (preQ1-tRNA) to give epoxyqueuosine (oQ-tRNA). The protein is S-adenosylmethionine:tRNA ribosyltransferase-isomerase of Methylorubrum extorquens (strain CM4 / NCIMB 13688) (Methylobacterium extorquens).